Reading from the N-terminus, the 410-residue chain is Bifunctional malic/malolactic enzyme (410 aa).

Y36 acts as the Proton donor in catalysis. Catalysis depends on K91, which acts as the Proton acceptor. The a divalent metal cation site is built by E133, D134, and D159. NADP(+)-binding positions include 192–195 (AGAA), N286, and N317.

This sequence belongs to the malic enzymes family. As to quaternary structure, interacts with BrxC. Mg(2+) is required as a cofactor. Mn(2+) serves as cofactor.

It catalyses the reaction (S)-malate + NADP(+) = pyruvate + CO2 + NADPH. The catalysed reaction is oxaloacetate + H(+) = pyruvate + CO2. It carries out the reaction (S)-malate + H(+) = (S)-lactate + CO2. Its activity is regulated as follows. NADPH is a strong modulator that switches activity from a pyruvate-producing malic enzyme to a lactate-generating malolactic enzyme. Bifunctional enzyme with both malic and malolactic enzyme activities. In the absence of NADPH, catalyzes the reversible decarboxylation of malate to pyruvate. Can use NAD and NADP, but with a very strong preference for NADP. In the presence of excess NADPH, catalyzes the non-oxidative decarboxylation of malate to lactate. During growth on glucose, contributes to NADPH balancing via oxidation of the NADPH produced in excess by other enzymatic reactions. Can also catalyze the decarboxylation of oxaloacetate. This chain is Bifunctional malic/malolactic enzyme (ytsJ), found in Bacillus subtilis (strain 168).